The primary structure comprises 473 residues: Adenosylhomocysteinase (473 aa).

Substrate-binding residues include T60, D135, and E197. T198 to T200 provides a ligand contact to NAD(+). The substrate site is built by K227 and D231. NAD(+) is bound by residues N232, G261–G266, E284, N319, I340–H342, and N385.

It belongs to the adenosylhomocysteinase family. Requires NAD(+) as cofactor.

Its subcellular location is the cytoplasm. It carries out the reaction S-adenosyl-L-homocysteine + H2O = L-homocysteine + adenosine. The protein operates within amino-acid biosynthesis; L-homocysteine biosynthesis; L-homocysteine from S-adenosyl-L-homocysteine: step 1/1. Its function is as follows. May play a key role in the regulation of the intracellular concentration of adenosylhomocysteine. The chain is Adenosylhomocysteinase from Bradyrhizobium sp. (strain BTAi1 / ATCC BAA-1182).